The following is a 153-amino-acid chain: MTPTLETKYVFTITARIGDVTSAGEIGTGVRRIIPILGGEVKGEGISGQVLPFGADFQIIRPNELIELEAKYAFETDDGAVVYVENVGIRFGPVELLRKLKRGEPVDPKVIYFRTRPRFETGHPNYQWLMQYLFVGSAARHADRVVIDVHQVL.

Belongs to the UPF0311 family.

The protein is UPF0311 protein RPA1785 of Rhodopseudomonas palustris (strain ATCC BAA-98 / CGA009).